A 245-amino-acid chain; its full sequence is Probable inactive carboxylesterase Os04g0669700 (245 aa).

Active-site charge relay system residues include Ser-115 and His-201.

This sequence belongs to the AB hydrolase superfamily. AB hydrolase 2 family.

This is Probable inactive carboxylesterase Os04g0669700 from Oryza sativa subsp. japonica (Rice).